A 376-amino-acid chain; its full sequence is Carbohydrate sulfotransferase 14 (376 aa).

A disordered region spans residues 1-30; sequence MFPRPLTPLAAPKSAETLGRTPRRAPLGRA. Residues 1 to 39 are Cytoplasmic-facing; that stretch reads MFPRPLTPLAAPKSAETLGRTPRRAPLGRARAGLGGPPL. Residues 18–30 are compositionally biased toward low complexity; the sequence is LGRTPRRAPLGRA. A helical; Signal-anchor for type II membrane protein membrane pass occupies residues 40 to 60; that stretch reads LLPSMLMFAVIVASSGLLLMI. Topologically, residues 61–376 are lumenal; it reads ERGILSEMKP…PNVTKEACHQ (316 aa). Residues 76-96 are disordered; the sequence is PSHKGAAWSGTDPKPRGLSLD. A glycan (N-linked (GlcNAc...) asparagine) is linked at Asn-110. 3'-phosphoadenylyl sulfate-binding positions include 155–161 and 213–221; these read PKVACSN and RDPLERLLS. The N-linked (GlcNAc...) asparagine glycan is linked to Asn-368.

The protein belongs to the sulfotransferase 2 family.

The protein resides in the golgi apparatus membrane. The enzyme catalyses dermatan + n 3'-phosphoadenylyl sulfate = dermatan 4'-sulfate + n adenosine 3',5'-bisphosphate + n H(+). Functionally, catalyzes the transfer of sulfate to position 4 of the N-acetylgalactosamine (GalNAc) residue of dermatan sulfate. Plays a pivotal role in the formation of 4-0-sulfated IdoA blocks in dermatan sulfate. Transfers sulfate to the C-4 hydroxyl of beta1,4-linked GalNAc that is substituted with an alpha-linked iduronic acid (IdoUA) at the C-3 hydroxyl. Transfers sulfate more efficiently to GalNAc residues in -IdoUA-GalNAc-IdoUA- than in -GlcUA-GalNAc-GlcUA-sequences. Has preference for partially desulfated dermatan sulfate. Addition of sulfate to GalNAc may occur immediately after epimerization of GlcUA to IdoUA. Appears to have an important role in the formation of the cerebellar neural network during postnatal brain development. The chain is Carbohydrate sulfotransferase 14 (Chst14) from Mus musculus (Mouse).